The sequence spans 532 residues: ATP-dependent RNA helicase DBP3 (532 aa).

The disordered stretch occupies residues 1–78; the sequence is MGKRDRTEDD…EVAEEKPKMT (78 aa). Positions 15-58 are enriched in basic residues; that stretch reads KKVKLDKKDKKEKKEKKDKKDKKDKKDKKDKKDKKEKKEKKEKK. Positions 126–152 match the Q motif motif; it reads MEFSHVTLDPRITKVLTKFPRPTPIQA. Residues 155 to 327 enclose the Helicase ATP-binding domain; it reads WPYLLAGKDM…EGFMKTPTKV (173 aa). 168 to 175 serves as a coordination point for ATP; sequence AETGSGKT. Positions 274 to 277 match the DEAD box motif; sequence DEAD. The region spanning 356–502 is the Helicase C-terminal domain; the sequence is RLLDLLRQYA…PVPDELLKFG (147 aa).

This sequence belongs to the DEAD box helicase family. DDX5/DBP2 subfamily.

Its subcellular location is the nucleus. The protein localises to the nucleolus. It catalyses the reaction ATP + H2O = ADP + phosphate + H(+). Functionally, ATP-dependent RNA helicase required for 60S ribosomal subunit synthesis. Involved in efficient pre-rRNA processing, predominantly at site A3, which is necessary for the normal formation of 25S and 5.8S rRNAs. The protein is ATP-dependent RNA helicase DBP3 (DBP3) of Yarrowia lipolytica (strain CLIB 122 / E 150) (Yeast).